Here is a 72-residue protein sequence, read N- to C-terminus: Translation initiation factor IF-1 (72 aa).

In terms of domain architecture, S1-like spans 1–72; it reads MAKDDVIEIE…TKGRITYRFK (72 aa).

This sequence belongs to the IF-1 family. Component of the 30S ribosomal translation pre-initiation complex which assembles on the 30S ribosome in the order IF-2 and IF-3, IF-1 and N-formylmethionyl-tRNA(fMet); mRNA recruitment can occur at any time during PIC assembly.

It is found in the cytoplasm. Functionally, one of the essential components for the initiation of protein synthesis. Stabilizes the binding of IF-2 and IF-3 on the 30S subunit to which N-formylmethionyl-tRNA(fMet) subsequently binds. Helps modulate mRNA selection, yielding the 30S pre-initiation complex (PIC). Upon addition of the 50S ribosomal subunit IF-1, IF-2 and IF-3 are released leaving the mature 70S translation initiation complex. In Ligilactobacillus salivarius (strain UCC118) (Lactobacillus salivarius), this protein is Translation initiation factor IF-1.